We begin with the raw amino-acid sequence, 62 residues long: Small ribosomal subunit protein eS27 (62 aa).

Positions 17, 20, 36, and 39 each coordinate Zn(2+). A C4-type zinc finger spans residues 17 to 39 (CPDCENEQTIFDRACTPVDCIVC).

The protein belongs to the eukaryotic ribosomal protein eS27 family. In terms of assembly, part of the 30S ribosomal subunit. Requires Zn(2+) as cofactor.

This is Small ribosomal subunit protein eS27 from Methanospirillum hungatei JF-1 (strain ATCC 27890 / DSM 864 / NBRC 100397 / JF-1).